A 194-amino-acid chain; its full sequence is Fe/S biogenesis protein NfuA (194 aa).

Positions 151 and 154 each coordinate [4Fe-4S] cluster.

The protein belongs to the NfuA family. In terms of assembly, homodimer. [4Fe-4S] cluster serves as cofactor.

Involved in iron-sulfur cluster biogenesis. Binds a 4Fe-4S cluster, can transfer this cluster to apoproteins, and thereby intervenes in the maturation of Fe/S proteins. Could also act as a scaffold/chaperone for damaged Fe/S proteins. In Photobacterium profundum (strain SS9), this protein is Fe/S biogenesis protein NfuA.